The chain runs to 67 residues: Large ribosomal subunit protein uL29 (67 aa).

This sequence belongs to the universal ribosomal protein uL29 family.

The protein is Large ribosomal subunit protein uL29 of Magnetococcus marinus (strain ATCC BAA-1437 / JCM 17883 / MC-1).